The sequence spans 367 residues: FAD synthetase 2, chloroplastic (367 aa).

A chloroplast-targeting transit peptide spans 1 to 57; the sequence is MLCGGSRVLQHLSDHNHHNSIGLGLGFCGAKIVQLSSFFLRPSQAMAKSHHFSRKLR.

It depends on Mg(2+) as a cofactor.

The protein resides in the plastid. The protein localises to the chloroplast. It catalyses the reaction FMN + ATP + H(+) = FAD + diphosphate. The protein operates within cofactor biosynthesis; FAD biosynthesis; FAD from FMN: step 1/1. Functionally, catalyzes the adenylation of flavin mononucleotide (FMN) to form flavin adenine dinucleotide (FAD) coenzyme. The protein is FAD synthetase 2, chloroplastic of Arabidopsis thaliana (Mouse-ear cress).